The sequence spans 107 residues: Small ribosomal subunit protein uS10c (107 aa).

The protein belongs to the universal ribosomal protein uS10 family. As to quaternary structure, part of the 30S ribosomal subunit.

Its subcellular location is the plastid. The protein localises to the chloroplast. Functionally, involved in the binding of tRNA to the ribosomes. This Phaeodactylum tricornutum (strain CCAP 1055/1) protein is Small ribosomal subunit protein uS10c.